A 442-amino-acid chain; its full sequence is NAD kinase 2, mitochondrial (442 aa).

The N-terminal 62 residues, 1–62 (MTCYRGFLLG…RELAGCGSRA (62 aa)), are a transit peptide targeting the mitochondrion. Residues 24–36 (RGPGAGGPAARPR) show a composition bias toward low complexity. The tract at residues 24 to 60 (RGPGAGGPAARPRLGGDGGGRRHLGQGQPRELAGCGS) is disordered. An N6-acetyllysine; alternate modification is found at K76. The residue at position 76 (K76) is an N6-succinyllysine; alternate. S188 carries the post-translational modification Phosphoserine. K302 is modified (N6-succinyllysine). K317 is modified (N6-acetyllysine; alternate). K317 is modified (N6-succinyllysine; alternate). Position 367 is a phosphoserine (S367). At K397 the chain carries N6-acetyllysine.

Belongs to the NAD kinase family. Homodimer. As to expression, widely expressed.

The protein resides in the mitochondrion. The enzyme catalyses NAD(+) + ATP = ADP + NADP(+) + H(+). With respect to regulation, inhibited by NADH, NADPH and NADP(+). Mitochondrial NAD(+) kinase that phosphorylates NAD(+) to yield NADP(+). Can use both ATP or inorganic polyphosphate as the phosphoryl donor. Also has weak NADH kinase activity in vitro; however NADH kinase activity is much weaker than the NAD(+) kinase activity and may not be relevant in vivo. This chain is NAD kinase 2, mitochondrial (NADK2), found in Homo sapiens (Human).